Reading from the N-terminus, the 521-residue chain is Riboflavin transporter MCH5 (521 aa).

2 disordered regions span residues 1–33 and 65–96; these read MSSDSLTPKDTIVPEEQTNQLRQPDLDEDSIHY and NKGTDIESQPHWGENTSSTHDSDKEEDSNEEI. The Cytoplasmic segment spans residues 1–103; that stretch reads MSSDSLTPKD…EEIESFPEGG (103 aa). The helical transmembrane segment at 104-124 threads the bilayer; the sequence is FKAWVVTFGCFLGLIACFGLL. N125 carries N-linked (GlcNAc...) asparagine glycosylation. The Extracellular portion of the chain corresponds to 125-143; sequence NSTGVIESHLQDNQLSSES. Residues 144–164 form a helical membrane-spanning segment; it reads VSTIGWLFSLFLFVCSASCII. The Cytoplasmic segment spans residues 165 to 172; it reads SGTYFDRN. The chain crosses the membrane as a helical span at residues 173–193; that stretch reads GFRTIMIVGTVFHVAGLFATA. N194 is a glycosylation site (N-linked (GlcNAc...) asparagine). Residues 194–200 lie on the Extracellular side of the membrane; the sequence is NSTKYWH. The chain crosses the membrane as a helical span at residues 201–221; sequence FILSFAIVCGFGNGIVLSPLV. Residues 222 to 233 are Cytoplasmic-facing; that stretch reads SVPAHYFFKRRG. Residues 234 to 254 form a helical membrane-spanning segment; that stretch reads TALAMATIGGSVGGVVFPIML. At 255–269 the chain is on the extracellular side; it reads RSFFSMKSDTDPTYG. Residues 270-290 traverse the membrane as a helical segment; the sequence is FVWGIRTLGFLDLALLTLSII. Residues 291 to 325 are Cytoplasmic-facing; sequence LVKERLPHVIENSKDGESRWRYILRVYILQCFDAK. The chain crosses the membrane as a helical span at residues 326–346; the sequence is AFLDMKYLFCVLGTVFSELSI. Residues 347–367 are Extracellular-facing; that stretch reads NSALTYYGSYATSHGISANDA. Residues 368-388 traverse the membrane as a helical segment; that stretch reads YTLIMIINVCGIPGRWVPGYL. At 389–396 the chain is on the cytoplasmic side; that stretch reads SDKFGRFN. A helical membrane pass occupies residues 397–417; the sequence is VAIATLLTLFIVMFVGWLPFG. Over 418-422 the chain is Extracellular; that stretch reads TNLTN. N419 is a glycosylation site (N-linked (GlcNAc...) asparagine). The helical transmembrane segment at 423–443 threads the bilayer; that stretch reads MYVISALYGFCSGSVFSLLPV. The Cytoplasmic portion of the chain corresponds to 444–461; the sequence is CCGQISKTEEFGKRYSTM. A helical membrane pass occupies residues 462 to 482; it reads YFVVGFGTLVGIPITGAIISI. Residues 483-487 lie on the Extracellular side of the membrane; it reads KTTAD. Residues 488–508 traverse the membrane as a helical segment; that stretch reads YQHYIIFCGLATFVSAVCYII. Residues 509-521 are Cytoplasmic-facing; the sequence is SRAYCVGFKWVRF.

It belongs to the major facilitator superfamily. Monocarboxylate porter (TC 2.A.1.13) family.

It is found in the cell membrane. Riboflavin transporter involved in riboflavin (vitamin B2) uptake. Does not act in the transport of monocarboxylic acids across the plasma membrane. This is Riboflavin transporter MCH5 (MCH5) from Saccharomyces cerevisiae (strain ATCC 204508 / S288c) (Baker's yeast).